Here is a 141-residue protein sequence, read N- to C-terminus: Calcium-binding protein SPEC 2D (141 aa).

EF-hand domains follow at residues 10–42 (DQIK…MKSV), 43–72 (GHVL…AMIL), 73–107 (DKKC…FDRQ), and 108–141 (ITED…MNFC). Residues Asp23, Asn25, Asp27, and Asn29 each coordinate Ca(2+). Ca(2+) contacts are provided by Asp84, Asp86, Lys90, Asp95, Asp121, Asp125, Lys127, and Glu132.

Found in cell lineages giving rise to the aboral ectoderm, a squamous epithelium covering the surface of the late stage embryo and larva.

Functionally, calcium-binding protein involved in larval development and metamorphosis. Likely to function as calcium buffers mediating the transport of calcium from the sea water to the blastocoel where calcium is required for skeleton formation. In Strongylocentrotus purpuratus (Purple sea urchin), this protein is Calcium-binding protein SPEC 2D (SPEC2D).